A 427-amino-acid polypeptide reads, in one-letter code: Zinc-finger homeodomain protein 7 (427 aa).

Disordered stretches follow at residues 1 to 60 (MEYK…SLMD) and 91 to 118 (LHAAHHHGQGRRVEAPGGESQHHLQRHH). The span at 10–28 (EEEEEEEEEEDDEEEDEEE) shows a compositional bias: acidic residues. Residues 50–60 (SSASSPSSLMD) are compositionally biased toward low complexity. A ZF-HD dimerization-type; degenerate zinc finger spans residues 163 to 211 (YRECLKNHAARMGAHVLDGCGEFMSSPGDGAAALACAACGCHRSFHRRE). 2 disordered regions span residues 264–320 (KRPP…SKKR) and 375–427 (HLAK…QHDA). 2 stretches are compositionally biased toward low complexity: residues 271-283 (VSPASAPAALAES) and 301-312 (HAAAVVAASASA). The homeobox DNA-binding region spans 318-381 (KKRFRTKFTA…NNKHLAKTPP (64 aa)). The segment covering 380 to 401 (PPSPTSQPPPPPLHHDPSPPPP) has biased composition (pro residues). Residues 402–416 (PHHHHHHHHHHHPPQ) show a composition bias toward basic residues. Residues 417–427 (HHQQQQQQHDA) show a composition bias toward low complexity.

In terms of assembly, homo- and heterodimer with other ZFHD proteins.

Its subcellular location is the nucleus. In terms of biological role, putative transcription factor. This is Zinc-finger homeodomain protein 7 (ZHD7) from Oryza sativa subsp. japonica (Rice).